We begin with the raw amino-acid sequence, 316 residues long: uncharacterized protein (316 aa).

A helical membrane pass occupies residues 12–34 (RWVCLTSVILFCFCIAVMRYGGV).

The protein resides in the membrane. This is an uncharacterized protein from Treponema pallidum (strain Nichols).